We begin with the raw amino-acid sequence, 224 residues long: Probable 2' cyclic ADP-D-ribose synthase BdTIR (224 aa).

A TIR domain is found at 51–178 (SRYEVFINHR…RFKFALREAK (128 aa)). Residues 60–65 (RGVDTK) and Gly-93 contribute to the NAD(+) site. Glu-127 is an active-site residue.

In terms of assembly, homodimer.

The enzyme catalyses NAD(+) + H2O = ADP-D-ribose + nicotinamide + H(+). It carries out the reaction NADP(+) + H2O = ADP-D-ribose 2'-phosphate + nicotinamide + H(+). The catalysed reaction is NAD(+) = 2'cADPR + nicotinamide + H(+). An NAD(+) hydrolase (NADase). Upon activation catalyzes cleavage of NAD(+) into ADP-D-ribose (ADPR) and nicotinamide; NAD(+) cleavage triggers a defense system that promotes cell death. In addition to ADPR, also generates a cyclization variant of cyclic ADPR termed v-cADPR (2'cADPR). Also hydrolyzes NADP(+), but not other NAD(+)-related molecules. v-cADPR activates ThsA, an NAD(+) hydrolase in B.cereus (AC J8G6Z1). Probably makes 2'cADPR; the cADPR made by this protein is bound by cmTad1 (AC P0DW61) and activates ThsA from B.cereus. Boiling cmTad1 bound to the cyclic nucleotide releases 2'cADPR, strongly suggesting it is the product of this protein. In Brachypodium distachyon (Purple false brome), this protein is Probable 2' cyclic ADP-D-ribose synthase BdTIR.